The chain runs to 107 residues: Vasopressin-neurophysin 2 (107 aa).

Cysteine 1 and cysteine 6 are joined by a disulfide. Glycine 9 carries the post-translational modification Glycine amide. Intrachain disulfides connect cysteine 22–cysteine 66, cysteine 25–cysteine 39, cysteine 33–cysteine 56, cysteine 40–cysteine 46, cysteine 73–cysteine 85, cysteine 79–cysteine 97, and cysteine 86–cysteine 91.

Belongs to the vasopressin/oxytocin family. In terms of assembly, interacts with vasopressin receptors V1bR/AVPR1B (Ki=85 pM), V1aR/AVPR1A (Ki=0.6 nM) and V2R/AVPR2 (Ki=4.9 nM). Interacts with oxytocin receptor (OXTR) (Ki=110 nM).

Its subcellular location is the secreted. Functionally, neurophysin 2 specifically binds vasopressin. In terms of biological role, vasopressin has a direct antidiuretic action on the kidney, it also causes vasoconstriction of the peripheral vessels. Acts by binding to vasopressin receptors (V1bR/AVPR1B, V1aR/AVPR1A, and V2R/AVPR2). The polypeptide is Vasopressin-neurophysin 2 (AVP) (Balaenoptera physalus (Fin whale)).